The primary structure comprises 403 residues: F-box protein At1g60400 (403 aa).

The 47-residue stretch at I13–E59 folds into the F-box domain.

This is F-box protein At1g60400 from Arabidopsis thaliana (Mouse-ear cress).